We begin with the raw amino-acid sequence, 331 residues long: MHRRVITFSKNAFLPLTTVCQNRCGYCCFRTPVREGCVMAPTEAIRTLEASAALGCTEALFTFGERPGAVPGFNEMLGRLGYADILDYVYHLSLAAIERDLLPHTNAGILTYAELDRLREVNASMGLMLETTADVPAHRNSPGKDPAVRIEMIENAGKLSIPFTTGILLGIGETEDDREESLRVIADLHRRYGHIQEVIVQNFCPKPGTAMEGAAVPGPDEIGAAISLAREILPADVAVQIPPNLADASRLIGCGVNDLGGVSPLTIDYVNPEHPWPQLDELRRIAGDAELRERLCIYPQYIEKGRYSPLLEPLIRRLAERIAAPGRDAGA.

The region spanning 6-244 is the Radical SAM core domain; it reads ITFSKNAFLP…ADVAVQIPPN (239 aa). [4Fe-4S] cluster is bound by residues C20, C24, and C27.

Belongs to the radical SAM superfamily. CofG family. As to quaternary structure, consists of two subunits, CofG and CofH. Requires [4Fe-4S] cluster as cofactor.

The enzyme catalyses 5-amino-5-(4-hydroxybenzyl)-6-(D-ribitylimino)-5,6-dihydrouracil + S-adenosyl-L-methionine = 7,8-didemethyl-8-hydroxy-5-deazariboflavin + 5'-deoxyadenosine + L-methionine + NH4(+) + H(+). The protein operates within cofactor biosynthesis; coenzyme F0 biosynthesis. Functionally, catalyzes the radical-mediated synthesis of 7,8-didemethyl-8-hydroxy-5-deazariboflavin from 5-amino-5-(4-hydroxybenzyl)-6-(D-ribitylimino)-5,6-dihydrouracil. The protein is 7,8-didemethyl-8-hydroxy-5-deazariboflavin synthase of Methanoculleus marisnigri (strain ATCC 35101 / DSM 1498 / JR1).